We begin with the raw amino-acid sequence, 101 residues long: MAKKSIVNRNLKRLKTVNKYAARRAEIVSILRDAGSDIEAKASARDLLQKLPRNASPVRLRQRCALTGRPRGVFSKFGLGRIKLREIAMRGEIPGLIKASW.

Belongs to the universal ribosomal protein uS14 family. As to quaternary structure, part of the 30S ribosomal subunit. Contacts proteins S3 and S10.

Functionally, binds 16S rRNA, required for the assembly of 30S particles and may also be responsible for determining the conformation of the 16S rRNA at the A site. The chain is Small ribosomal subunit protein uS14 from Nitrosomonas europaea (strain ATCC 19718 / CIP 103999 / KCTC 2705 / NBRC 14298).